Reading from the N-terminus, the 302-residue chain is N-acetylaspartate synthetase (302 aa).

Residues 46-60 (PGPAAAPPAPPPAPV) are compositionally biased toward pro residues. The interval 46–72 (PGPAAAPPAPPPAPVAQPHGGAGGAGP) is disordered. The chain crosses the membrane as a helical span at residues 121 to 141 (YALLAALCFAVSRSLLLTCLV). Positions 143–283 (AALLGLRYYY…VLPGMTLSLA (141 aa)) constitute an N-acetyltransferase domain.

The protein belongs to the NAT8 family. As to expression, expressed in brain.

Its subcellular location is the cytoplasm. The protein localises to the microsome membrane. It localises to the mitochondrion membrane. The protein resides in the endoplasmic reticulum membrane. The enzyme catalyses L-aspartate + acetyl-CoA = N-acetyl-L-aspartate + CoA + H(+). Aminooxyacetic acid (AOAA) blocks its activity in both cytoplasm and mitochondria. Functionally, catalyzes the synthesis of N-acetylaspartate acid (NAA) from L-aspartate and acetyl-CoA. Promotes dopamine uptake by regulating TNF-alpha expression. Attenuates methamphetamine-induced inhibition of dopamine uptake. The sequence is that of N-acetylaspartate synthetase from Homo sapiens (Human).